The chain runs to 137 residues: Basic phospholipase A2 homolog MT1 (137 aa).

Positions M1–G16 are cleaved as a signal peptide. 7 disulfides stabilise this stretch: C42/C131, C44/C60, C59/C111, C65/C137, C66/C104, C73/C97, and C91/C102. The interval K121 to K133 is important for membrane-damaging activities in eukaryotes and bacteria; heparin-binding.

This sequence belongs to the phospholipase A2 family. Group II subfamily. K49 sub-subfamily. As to quaternary structure, binds to heparin. Expressed by the venom gland.

The protein resides in the secreted. With respect to regulation, heparin and wedelolactone inhibit the myotoxic activity. The PLA2 inhibitor, para-bromophenacyl bromide (BPB), inhibits the myotoxic activity. Snake venom phospholipase A2 homolog that lacks enzymatic activity. Has myotoxic activities. A model of myotoxic mechanism has been proposed: an apo Lys49-PLA2 is activated by the entrance of a hydrophobic molecule (e.g. fatty acid) at the hydrophobic channel of the protein leading to a reorientation of a monomer. This reorientation causes a transition between 'inactive' to 'active' states, causing alignment of C-terminal and membrane-docking sites (MDoS) side-by-side and putting the membrane-disruption sites (MDiS) in the same plane, exposed to solvent and in a symmetric position for both monomers. The MDoS region stabilizes the toxin on membrane by the interaction of charged residues with phospholipid head groups. Subsequently, the MDiS region destabilizes the membrane with penetration of hydrophobic residues. This insertion causes a disorganization of the membrane, allowing an uncontrolled influx of ions (i.e. calcium and sodium), and eventually triggering irreversible intracellular alterations and cell death. The chain is Basic phospholipase A2 homolog MT1 from Agkistrodon contortrix laticinctus (Broad-banded copperhead).